A 241-amino-acid chain; its full sequence is Phosphoadenosine 5'-phosphosulfate reductase (241 aa).

C235 serves as the catalytic Nucleophile; cysteine thiosulfonate intermediate.

The protein belongs to the PAPS reductase family. CysH subfamily.

The protein localises to the cytoplasm. The catalysed reaction is [thioredoxin]-disulfide + sulfite + adenosine 3',5'-bisphosphate + 2 H(+) = [thioredoxin]-dithiol + 3'-phosphoadenylyl sulfate. It participates in sulfur metabolism; hydrogen sulfide biosynthesis; sulfite from sulfate: step 3/3. Functionally, catalyzes the formation of sulfite from phosphoadenosine 5'-phosphosulfate (PAPS) using thioredoxin as an electron donor. This chain is Phosphoadenosine 5'-phosphosulfate reductase, found in Xanthomonas oryzae pv. oryzae (strain MAFF 311018).